Here is a 210-residue protein sequence, read N- to C-terminus: Large ribosomal subunit protein uL4 (210 aa).

Residues 56–80 (FVSGGGKKPWRQKGTGRARAGSTRS) form a disordered region.

This sequence belongs to the universal ribosomal protein uL4 family. As to quaternary structure, part of the 50S ribosomal subunit.

In terms of biological role, one of the primary rRNA binding proteins, this protein initially binds near the 5'-end of the 23S rRNA. It is important during the early stages of 50S assembly. It makes multiple contacts with different domains of the 23S rRNA in the assembled 50S subunit and ribosome. Its function is as follows. Forms part of the polypeptide exit tunnel. The sequence is that of Large ribosomal subunit protein uL4 from Solidesulfovibrio magneticus (strain ATCC 700980 / DSM 13731 / RS-1) (Desulfovibrio magneticus).